The sequence spans 394 residues: Uroporphyrinogen decarboxylase 2, chloroplastic (394 aa).

Residues Arg74 to Arg78, Phe93, Ser123, Asp124, Tyr201, Ser256, and His371 each bind substrate.

The protein belongs to the uroporphyrinogen decarboxylase family. Homodimer.

It is found in the plastid. It localises to the chloroplast. It catalyses the reaction uroporphyrinogen III + 4 H(+) = coproporphyrinogen III + 4 CO2. The protein operates within porphyrin-containing compound metabolism; protoporphyrin-IX biosynthesis; coproporphyrinogen-III from 5-aminolevulinate: step 4/4. Its pathway is porphyrin-containing compound metabolism; chlorophyll biosynthesis. In terms of biological role, catalyzes the decarboxylation of four acetate groups of uroporphyrinogen-III to yield coproporphyrinogen-III. In Arabidopsis thaliana (Mouse-ear cress), this protein is Uroporphyrinogen decarboxylase 2, chloroplastic (HEME2).